We begin with the raw amino-acid sequence, 55 residues long: Large ribosomal subunit protein bL33 (55 aa).

The protein belongs to the bacterial ribosomal protein bL33 family.

This Paramagnetospirillum magneticum (strain ATCC 700264 / AMB-1) (Magnetospirillum magneticum) protein is Large ribosomal subunit protein bL33.